The primary structure comprises 194 residues: Type II restriction enzyme OkrAI (194 aa).

Mg(2+) is bound by residues Glu71, Asp86, and Trp100. Catalysis depends on Glu101, which acts as the Proton acceptor.

As to quaternary structure, homodimer. The cofactor is Mg(2+).

It carries out the reaction Endonucleolytic cleavage of DNA to give specific double-stranded fragments with terminal 5'-phosphates.. In terms of biological role, a P subtype restriction enzyme that recognizes the double-stranded sequence 5'-GGATCC-3' and cleaves after G-1. This is Type II restriction enzyme OkrAI from Oceanobacter kriegii (Oceanospirillum kriegii).